Here is a 376-residue protein sequence, read N- to C-terminus: N-acetyldiaminopimelate deacetylase (376 aa).

Aspartate 69 is an active-site residue. The active-site Proton acceptor is the glutamate 128.

This sequence belongs to the peptidase M20A family. N-acetyldiaminopimelate deacetylase subfamily.

The catalysed reaction is N-acetyl-(2S,6S)-2,6-diaminopimelate + H2O = (2S,6S)-2,6-diaminopimelate + acetate. Its pathway is amino-acid biosynthesis; L-lysine biosynthesis via DAP pathway; LL-2,6-diaminopimelate from (S)-tetrahydrodipicolinate (acetylase route): step 3/3. Catalyzes the conversion of N-acetyl-diaminopimelate to diaminopimelate and acetate. The polypeptide is N-acetyldiaminopimelate deacetylase (Bacillus thuringiensis subsp. konkukian (strain 97-27)).